The sequence spans 82 residues: Beta-neurotoxin Css9 (82 aa).

The first 17 residues, 1–17, serve as a signal peptide directing secretion; that stretch reads MKLLMLIVALMIIGVQS. The region spanning 18-81 is the LCN-type CS-alpha/beta domain; that stretch reads KDGYPMDHKG…VWDRATNKCR (64 aa). 4 disulfide bridges follow: Cys-28–Cys-80, Cys-32–Cys-54, Cys-39–Cys-61, and Cys-43–Cys-63.

Belongs to the long (4 C-C) scorpion toxin superfamily. Sodium channel inhibitor family. Beta subfamily. As to expression, expressed by the venom gland.

It is found in the secreted. Beta toxins bind voltage-independently at site-4 of sodium channels (Nav) and shift the voltage of activation toward more negative potentials thereby affecting sodium channel activation and promoting spontaneous and repetitive firing. This toxin compete with high affinity with 125I-Css4 bound on rat brain synaptosome and may bind with high affinity to Nav1.1/SCN1A, Nav1.2/SCN2A and Nav1.6/SCN8A. This Centruroides suffusus (Durango bark scorpion) protein is Beta-neurotoxin Css9.